The chain runs to 377 residues: Cytochrome b (377 aa).

4 helical membrane passes run 36–56, 80–102, 115–135, and 181–201; these read WGSL…FLAM, WLIR…LHMA, VWLI…MGYI, and FFVL…IHLI. Residues His86 and His100 each coordinate heme b. Residues His185 and His199 each coordinate heme b. Residue His204 coordinates a ubiquinone. 4 helical membrane-spanning segments follow: residues 227–247, 291–311, 326–346, and 354–374; these read YSSK…VIIF, LGGV…PFIS, LFWS…MPVV, and LTST…FLMI.

Belongs to the cytochrome b family. As to quaternary structure, the main subunits of complex b-c1 are: cytochrome b, cytochrome c1 and the Rieske protein. Requires heme b as cofactor.

It localises to the mitochondrion inner membrane. Component of the ubiquinol-cytochrome c reductase complex (complex III or cytochrome b-c1 complex) that is part of the mitochondrial respiratory chain. The b-c1 complex mediates electron transfer from ubiquinol to cytochrome c. Contributes to the generation of a proton gradient across the mitochondrial membrane that is then used for ATP synthesis. The sequence is that of Cytochrome b (mt:Cyt-b) from Myzostoma seymourcollegiorum (Polychaete worm).